A 215-amino-acid polypeptide reads, in one-letter code: Deoxyribose-phosphate aldolase (215 aa).

The active-site Proton donor/acceptor is the D89. The active-site Schiff-base intermediate with acetaldehyde is K150. The active-site Proton donor/acceptor is the K174.

It belongs to the DeoC/FbaB aldolase family. DeoC type 1 subfamily.

It is found in the cytoplasm. It carries out the reaction 2-deoxy-D-ribose 5-phosphate = D-glyceraldehyde 3-phosphate + acetaldehyde. It participates in carbohydrate degradation; 2-deoxy-D-ribose 1-phosphate degradation; D-glyceraldehyde 3-phosphate and acetaldehyde from 2-deoxy-alpha-D-ribose 1-phosphate: step 2/2. Catalyzes a reversible aldol reaction between acetaldehyde and D-glyceraldehyde 3-phosphate to generate 2-deoxy-D-ribose 5-phosphate. This chain is Deoxyribose-phosphate aldolase, found in Natronomonas pharaonis (strain ATCC 35678 / DSM 2160 / CIP 103997 / JCM 8858 / NBRC 14720 / NCIMB 2260 / Gabara) (Halobacterium pharaonis).